The chain runs to 527 residues: Nucleus accumbens-associated protein 1 (527 aa).

One can recognise a BTB domain in the interval 30-94 (CDVSVVVKGH…CYTGRLSMNV (65 aa)). Residues 131–153 (QGLHAEEAPSSEPQSPVAQTSGW) are disordered. Polar residues predominate over residues 141–152 (SEPQSPVAQTSG). Lysine 167 is covalently cross-linked (Glycyl lysine isopeptide (Lys-Gly) (interchain with G-Cter in SUMO1); alternate). Lysine 167 participates in a covalent cross-link: Glycyl lysine isopeptide (Lys-Gly) (interchain with G-Cter in SUMO2); alternate. Lysine 183 is covalently cross-linked (Glycyl lysine isopeptide (Lys-Gly) (interchain with G-Cter in SUMO2)). Position 188 is a phosphoserine (serine 188). The disordered stretch occupies residues 210-292 (DLAANRPHQP…DEEEDGGEEG (83 aa)). Residues 225–251 (APVVAAAQPAVAAGAGQPAGGVAAAGG) are compositionally biased toward low complexity. Positions 255–277 (GPSTSERTSPGTSSAYTSDSPGS) are enriched in polar residues. A Phosphoserine; by PKC modification is found at serine 259. A compositionally biased stretch (acidic residues) spans 281–292 (EEDEEEDGGEEG). Glycyl lysine isopeptide (Lys-Gly) (interchain with G-Cter in SUMO2) cross-links involve residues lysine 318, lysine 452, lysine 480, lysine 483, and lysine 498. Residues 374-471 (GTNVYITRAQ…DMCTNARRVV (98 aa)) enclose the BEN domain.

Homooligomer; mediated by the BTB domain. Interacts with HDAC3 and HDAC4. Interacts (via BTB domain) with CUL3, PSMD7 and RCOR1. In terms of tissue distribution, overexpressed in several types of carcinomas including ovarian serous carcinomas. Expression levels positively correlate with tumor recurrence in ovarian serous carcinomas, and intense immunoreactivity in primary ovarian tumors predicts early recurrence. Up-regulated in ovarian carcinomas after chemotherapy, suggesting a role in development of chemotherapy resistance in ovarian cancer.

It localises to the nucleus. It is found in the cytoplasm. Its function is as follows. Functions as a transcriptional repressor. Seems to function as a transcriptional corepressor in neuronal cells through recruitment of HDAC3 and HDAC4. Contributes to tumor progression, and tumor cell proliferation and survival. This may be mediated at least in part through repressing transcriptional activity of GADD45GIP1. Required for recruiting the proteasome from the nucleus to the cytoplasm and dendritic spines. The chain is Nucleus accumbens-associated protein 1 (NACC1) from Homo sapiens (Human).